A 190-amino-acid chain; its full sequence is Probable nicotinate-nucleotide adenylyltransferase (190 aa).

Belongs to the NadD family.

It carries out the reaction nicotinate beta-D-ribonucleotide + ATP + H(+) = deamido-NAD(+) + diphosphate. The protein operates within cofactor biosynthesis; NAD(+) biosynthesis; deamido-NAD(+) from nicotinate D-ribonucleotide: step 1/1. In terms of biological role, catalyzes the reversible adenylation of nicotinate mononucleotide (NaMN) to nicotinic acid adenine dinucleotide (NaAD). The protein is Probable nicotinate-nucleotide adenylyltransferase of Azobacteroides pseudotrichonymphae genomovar. CFP2.